Here is a 166-residue protein sequence, read N- to C-terminus: UPF0304 protein VV1_2093 (166 aa).

This sequence belongs to the UPF0304 family.

The protein is UPF0304 protein VV1_2093 of Vibrio vulnificus (strain CMCP6).